The sequence spans 252 residues: MPRLESGAWSCSCAARARHAARPGEAAPKADAMQSPSPSAGRAEREASGGSATTWRQHLVQRSVVLFVVGAFMALVLNLLQIQRNVTLFPDEVIATLFSSAWWVPPCCGTAAAVVGLLYPCIDSHLGEPHKFKREWASVMRCIAVFVGINHASAKLDFANNVQLSLTLAALSLGLWWTFDRSRSGLGLGITIAFVATLITQFLVYNGVYQYTSPDFLYIRSWLPCIFFSGGVTVGNIGRQLAMGIPEKPHND.

The Cytoplasmic segment spans residues 1–59 (MPRLESGAWSCSCAARARHAARPGEAAPKADAMQSPSPSAGRAEREASGGSATTWRQHL). The segment at 22–48 (RPGEAAPKADAMQSPSPSAGRAEREAS) is disordered. The helical transmembrane segment at 60 to 82 (VQRSVVLFVVGAFMALVLNLLQI) threads the bilayer. Residues 83-101 (QRNVTLFPDEVIATLFSSA) are Extracellular-facing. The chain crosses the membrane as a helical span at residues 102–119 (WWVPPCCGTAAAVVGLLY). The Cytoplasmic portion of the chain corresponds to 120-134 (PCIDSHLGEPHKFKR). Residues 135 to 157 (EWASVMRCIAVFVGINHASAKLD) form a helical membrane-spanning segment. Residues 158–160 (FAN) are Extracellular-facing. Residues 161–179 (NVQLSLTLAALSLGLWWTF) form a helical membrane-spanning segment. At 180–184 (DRSRS) the chain is on the cytoplasmic side. The chain crosses the membrane as a helical span at residues 185-206 (GLGLGITIAFVATLITQFLVYN). The Extracellular portion of the chain corresponds to 207 to 220 (GVYQYTSPDFLYIR). A helical transmembrane segment spans residues 221–238 (SWLPCIFFSGGVTVGNIG). The Cytoplasmic portion of the chain corresponds to 239–252 (RQLAMGIPEKPHND). Residues 246–252 (PEKPHND) carry the KxHxx motif.

It belongs to the INSIG family. In terms of assembly, interacts with SCAP; interaction is direct and only takes place in the presence of sterols; it prevents interaction between SCAP and the coat protein complex II (COPII). Associates with the SCAP-SREBP complex; association is mediated via its interaction with SCAP and only takes place in the presence of sterols.

The protein localises to the endoplasmic reticulum membrane. In terms of biological role, oxysterol-binding protein that mediates feedback control of cholesterol synthesis by controlling both endoplasmic reticulum to Golgi transport of SCAP and degradation of HMGCR. Acts as a negative regulator of cholesterol biosynthesis by mediating the retention of the SCAP-SREBP complex in the endoplasmic reticulum, thereby blocking the processing of sterol regulatory element-binding proteins (SREBPs). Binds oxysterol, including 25-hydroxycholesterol, regulating interaction with SCAP and retention of the SCAP-SREBP complex in the endoplasmic reticulum. In presence of oxysterol, interacts with SCAP, retaining the SCAP-SREBP complex in the endoplasmic reticulum, thereby preventing SCAP from escorting SREBPs to the Golgi. Sterol deprivation reduces oxysterol-binding, disrupting the interaction between INSIG1 and SCAP, thereby promoting Golgi transport of the SCAP-SREBP complex, followed by processing and nuclear translocation of SREBPs. Also regulates cholesterol synthesis by regulating degradation of HMGCR. In Gallus gallus (Chicken), this protein is Insulin-induced gene 1 protein.